We begin with the raw amino-acid sequence, 148 residues long: uncharacterized protein (148 aa).

A disordered region spans residues 1–108 (MGRAGPRSTA…PSRLRGKRSL (108 aa)). Over residues 22 to 42 (RRPRPWQKPTSPRRLHRRRPR) the composition is skewed to basic residues. Positions 88-97 (DTSASNPSQR) are enriched in polar residues.

This is an uncharacterized protein from Homo sapiens (Human).